We begin with the raw amino-acid sequence, 338 residues long: Large ribosomal subunit protein uL10 (338 aa).

Residues 298 to 338 (TVQQSQSQQPAAEEKKEEKKEEEKKGPSEEEIASGLASLFG) form a disordered region. Over residues 309 to 325 (AEEKKEEKKEEEKKGPS) the composition is skewed to basic and acidic residues.

Belongs to the universal ribosomal protein uL10 family. As to quaternary structure, part of the 50S ribosomal subunit. Forms part of the ribosomal stalk which helps the ribosome interact with GTP-bound translation factors. Forms a heptameric L10(L12)2(L12)2(L12)2 complex, where L10 forms an elongated spine to which the L12 dimers bind in a sequential fashion.

Its function is as follows. Forms part of the ribosomal stalk, playing a central role in the interaction of the ribosome with GTP-bound translation factors. This Saccharolobus solfataricus (strain ATCC 35092 / DSM 1617 / JCM 11322 / P2) (Sulfolobus solfataricus) protein is Large ribosomal subunit protein uL10.